The sequence spans 211 residues: Thiamine-phosphate synthase (211 aa).

Residues Gln37–Lys41 and Asn69 each bind 4-amino-2-methyl-5-(diphosphooxymethyl)pyrimidine. Positions 70 and 89 each coordinate Mg(2+). Ser108 provides a ligand contact to 4-amino-2-methyl-5-(diphosphooxymethyl)pyrimidine. Ser135–Thr137 is a binding site for 2-[(2R,5Z)-2-carboxy-4-methylthiazol-5(2H)-ylidene]ethyl phosphate. Lys138 is a binding site for 4-amino-2-methyl-5-(diphosphooxymethyl)pyrimidine. Residues Gly165 and Leu185–Ser186 each bind 2-[(2R,5Z)-2-carboxy-4-methylthiazol-5(2H)-ylidene]ethyl phosphate.

The protein belongs to the thiamine-phosphate synthase family. Mg(2+) serves as cofactor.

The catalysed reaction is 2-[(2R,5Z)-2-carboxy-4-methylthiazol-5(2H)-ylidene]ethyl phosphate + 4-amino-2-methyl-5-(diphosphooxymethyl)pyrimidine + 2 H(+) = thiamine phosphate + CO2 + diphosphate. It catalyses the reaction 2-(2-carboxy-4-methylthiazol-5-yl)ethyl phosphate + 4-amino-2-methyl-5-(diphosphooxymethyl)pyrimidine + 2 H(+) = thiamine phosphate + CO2 + diphosphate. The enzyme catalyses 4-methyl-5-(2-phosphooxyethyl)-thiazole + 4-amino-2-methyl-5-(diphosphooxymethyl)pyrimidine + H(+) = thiamine phosphate + diphosphate. The protein operates within cofactor biosynthesis; thiamine diphosphate biosynthesis; thiamine phosphate from 4-amino-2-methyl-5-diphosphomethylpyrimidine and 4-methyl-5-(2-phosphoethyl)-thiazole: step 1/1. Condenses 4-methyl-5-(beta-hydroxyethyl)thiazole monophosphate (THZ-P) and 2-methyl-4-amino-5-hydroxymethyl pyrimidine pyrophosphate (HMP-PP) to form thiamine monophosphate (TMP). In Thiobacillus denitrificans (strain ATCC 25259 / T1), this protein is Thiamine-phosphate synthase.